Consider the following 146-residue polypeptide: Hemoglobin subunit beta-2 (146 aa).

Residues Glu2–His146 enclose the Globin domain. Heme b-binding residues include His63 and His92.

It belongs to the globin family. In terms of assembly, hb 2 is a heterotetramer of two alpha-2 and two beta-2 chains. In terms of tissue distribution, red blood cells.

Its function is as follows. Involved in oxygen transport from gills to the various peripheral tissues. In Gobionotothen gibberifrons (Humped rockcod), this protein is Hemoglobin subunit beta-2 (hbb2).